A 116-amino-acid polypeptide reads, in one-letter code: Non-specific lipid-transfer protein (116 aa).

An N-terminal signal peptide occupies residues 1-25; the sequence is MASMVMNVLCVAVACMVFSASYADA. Intrachain disulfides connect C28–C75, C38–C52, C53–C98, and C73–C112.

Belongs to the plant LTP family.

In terms of biological role, plant non-specific lipid-transfer proteins transfer phospholipids as well as galactolipids across membranes. May play a role in wax or cutin deposition in the cell walls of expanding epidermal cells and certain secretory tissues. This is Non-specific lipid-transfer protein from Gerbera hybrida (Daisy).